The sequence spans 432 residues: Trigger factor (432 aa).

The PPIase FKBP-type domain occupies 161-246 (GTRATINFVG…VVKVEARELP (86 aa)).

It belongs to the FKBP-type PPIase family. Tig subfamily.

It is found in the cytoplasm. It catalyses the reaction [protein]-peptidylproline (omega=180) = [protein]-peptidylproline (omega=0). Involved in protein export. Acts as a chaperone by maintaining the newly synthesized protein in an open conformation. Functions as a peptidyl-prolyl cis-trans isomerase. This chain is Trigger factor, found in Aliivibrio salmonicida (strain LFI1238) (Vibrio salmonicida (strain LFI1238)).